We begin with the raw amino-acid sequence, 376 residues long: MATLFTVARPSSLLYVSSINPSKTFSPSISLKLNSLSFSFGYRPKPLRFSKIRSSLPSESESESDLDASAVTDEWGEKPGDANEPDSQPDNVTVNVITDEWGEKSGPELEESGTRFMESDPPRNEDEWGGEIGGETEADAGNGSAVSDPTWELKRCLADSVYGTELGFKAGSEVRAEVLELVNQLEALNPTPAPLENPELLDGNWVLLYTAFSELIPLLAAGSTPLLKVKSISQSIDTNNLIIDNSTTLSSPFADFSFSATASFEVRSPSRIEVSFKEGTLKPPVIKSSVDLPESVGVFGQQISLSLLKQSLNPLQDVAANISRALSGQPPLKLPFPGNRGSSWLLTTYLDKDLRISRGDGGLFVLAREGSSLLEL.

The N-terminal 53 residues, 1 to 53 (MATLFTVARPSSLLYVSSINPSKTFSPSISLKLNSLSFSFGYRPKPLRFSKIR), are a transit peptide targeting the chloroplast. The tract at residues 54 to 146 (SSLPSESESE…EADAGNGSAV (93 aa)) is disordered. The segment covering 85-96 (PDSQPDNVTVNV) has biased composition (polar residues). The segment covering 117–126 (MESDPPRNED) has biased composition (basic and acidic residues).

This sequence belongs to the PAP/fibrillin family.

The protein localises to the plastid. It localises to the chloroplast. The protein resides in the plastoglobule. In terms of biological role, probably involved in light/cold stress-related jasmonate (JA) biosynthesis. In Arabidopsis thaliana (Mouse-ear cress), this protein is Probable plastid-lipid-associated protein 3, chloroplastic (PAP3).